The sequence spans 532 residues: ATP synthase subunit alpha (532 aa).

171–178 (GDRQTGKT) contacts ATP.

This sequence belongs to the ATPase alpha/beta chains family. As to quaternary structure, F-type ATPases have 2 components, CF(1) - the catalytic core - and CF(0) - the membrane proton channel. CF(1) has five subunits: alpha(3), beta(3), gamma(1), delta(1), epsilon(1). CF(0) has three main subunits: a(1), b(2) and c(9-12). The alpha and beta chains form an alternating ring which encloses part of the gamma chain. CF(1) is attached to CF(0) by a central stalk formed by the gamma and epsilon chains, while a peripheral stalk is formed by the delta and b chains.

It localises to the cell membrane. The enzyme catalyses ATP + H2O + 4 H(+)(in) = ADP + phosphate + 5 H(+)(out). Its function is as follows. Produces ATP from ADP in the presence of a proton gradient across the membrane. The alpha chain is a regulatory subunit. The sequence is that of ATP synthase subunit alpha from Amoebophilus asiaticus (strain 5a2).